The chain runs to 185 residues: Ribosome-recycling factor (185 aa).

Belongs to the RRF family.

The protein localises to the cytoplasm. Responsible for the release of ribosomes from messenger RNA at the termination of protein biosynthesis. May increase the efficiency of translation by recycling ribosomes from one round of translation to another. The chain is Ribosome-recycling factor from Wigglesworthia glossinidia brevipalpis.